Consider the following 422-residue polypeptide: Steroid hormone receptor ERR1 (422 aa).

Residues 1–66 (MSSQVVGIEP…EGAGSGEQGS (66 aa)) form a disordered region. Residues 1–76 (MSSQVVGIEP…GKLVLSSLPK (76 aa)) form a repressor domain region. Lys-14 participates in a covalent cross-link: Glycyl lysine isopeptide (Lys-Gly) (interchain with G-Cter in SUMO). Residues Ser-19 and Ser-22 each carry the phosphoserine modification. The nuclear receptor DNA-binding region spans 76–151 (KRLCLVCGDV…VGMLKEGVRL (76 aa)). NR C4-type zinc fingers lie at residues 79–99 (CLVC…CEAC) and 115–134 (CPAS…CQAC). N6-acetyllysine; by PCAF/KAT2B occurs at positions 129, 138, 160, and 162. Residue Lys-189 forms a Glycyl lysine isopeptide (Lys-Gly) (interchain with G-Cter in SUMO2) linkage. In terms of domain architecture, NR LBD spans 192–420 (PVNALVSHLL…KLFLEMLEAM (229 aa)). Lys-402 is covalently cross-linked (Glycyl lysine isopeptide (Lys-Gly) (interchain with G-Cter in SUMO); alternate). Residue Lys-402 forms a Glycyl lysine isopeptide (Lys-Gly) (interchain with G-Cter in SUMO2); alternate linkage. Residues 402-422 (KLEGKVPMHKLFLEMLEAMMD) form an AF-2 domain region.

The protein belongs to the nuclear hormone receptor family. NR3 subfamily. Binds DNA as a monomer or a homodimer. Interacts (via the AF2 domain) with coactivator PPARGC1A (via the L3 motif); the interaction greatly enhances transcriptional activity of genes involved in energy metabolism. Interacts with PIAS4; the interaction enhances sumoylation. Interacts with MAPK15; promotes re-localization of ESRRA to the cytoplasm through a XPO1-dependent mechanism then inhibits ESRRA transcriptional activity. Phosphorylation on Ser-19 enhances sumoylation on Lys-14 increasing repression of transcriptional activity. In terms of processing, sumoylated with SUMO2. Main site is Lys-14 which is enhanced by phosphorylation on Ser-19, cofactor activation, and by interaction with PIAS4. Sumoylation enhances repression of transcriptional activity, but has no effect on subcellular location nor on DNA binding. Post-translationally, reversibly acetylated. Acetylation by PCAF/KAT2 at Lys-129, Lys-138, Lys-160 and Lys-162 and PCAF/KAT2 decreases transcriptional activity probably by inhibiting DNA-binding activity; deacetylation involves SIRT1 and HDAC8 and increases DNA-binding. Most highly expressed in kidney, heart, and brown adipocytes. Also found in uterus, cervix and vagina.

The protein localises to the nucleus. It is found in the cytoplasm. In terms of biological role, binds to an ERR-alpha response element (ERRE) containing a single consensus half-site, 5'-TNAAGGTCA-3'. Can bind to the medium-chain acyl coenzyme A dehydrogenase (MCAD) response element NRRE-1 and may act as an important regulator of MCAD promoter. Binds to the C1 region of the lactoferrin gene promoter. Requires dimerization and the coactivator, PGC-1A, for full activity. The ERRalpha/PGC1alpha complex is a regulator of energy metabolism. Induces the expression of PERM1 in the skeletal muscle. The sequence is that of Steroid hormone receptor ERR1 (Esrra) from Mus musculus (Mouse).